Consider the following 115-residue polypeptide: U3-lycotoxin-Ls1b (115 aa).

Positions 1 to 20 (MKFVLLFGVLLVTLFSYSSA) are cleaved as a signal peptide. Residues 21-44 (EMLDDFDQADEDELLSLIEKEEAR) constitute a propeptide that is removed on maturation. 4 cysteine pairs are disulfide-bonded: Cys-48/Cys-63, Cys-55/Cys-72, Cys-62/Cys-87, and Cys-74/Cys-85.

Belongs to the neurotoxin 19 (CSTX) family. 01 subfamily. As to expression, expressed by the venom gland.

Its subcellular location is the secreted. This is U3-lycotoxin-Ls1b from Lycosa singoriensis (Wolf spider).